Consider the following 1433-residue polypeptide: Regulatory protein CAT8 (1433 aa).

Residues 20-38 (GSQALSGPSISNRTSSSEA) are compositionally biased toward polar residues. The interval 20–40 (GSQALSGPSISNRTSSSEANP) is disordered. The segment at residues 70–97 (CDRCRSKKTRCDGKRPQCSQCAAVGFEC) is a DNA-binding region (zn(2)-C6 fungal-type). The span at 936 to 946 (KPLFGSQSKNS) shows a compositional bias: polar residues. Disordered regions lie at residues 936–1024 (KPLF…DTKK), 1137–1162 (QNPE…NNLS), 1200–1236 (SASA…ILGS), and 1324–1433 (LNPT…QNAK). 2 stretches are compositionally biased toward basic and acidic residues: residues 947–965 (LENR…EHEY) and 994–1005 (LKYEKDAKRNAK). Composition is skewed to polar residues over residues 1138-1162 (NPEN…NNLS), 1221-1235 (PPST…SILG), and 1326-1348 (PTDS…SNQR). The segment covering 1349–1362 (SLSSGNDSKGDSSS) has biased composition (low complexity). Composition is skewed to polar residues over residues 1363–1391 (QENS…SGPS) and 1418–1433 (SNTD…QNAK).

In terms of processing, could be the target of the SNF1/CAT1 - SNF4/CAT3 kinase complex.

The protein localises to the nucleus. Activator of the gluconeogenic enzymes FBP1 and PCK1 genes. This chain is Regulatory protein CAT8 (CAT8), found in Saccharomyces cerevisiae (strain ATCC 204508 / S288c) (Baker's yeast).